The following is a 1124-amino-acid chain: uncharacterized protein (1124 aa).

Positions 1 to 28 (MALFPRSILIALVLSFVLNLGLVTKIHA) are cleaved as a signal peptide. The next 7 helical transmembrane spans lie at 332–352 (IVTA…LLAG), 359–379 (EYIN…GINI), 393–413 (MIQW…SWVM), 495–515 (MLVS…AFMV), 522–542 (MISI…FLFA), 555–575 (MISF…MFAV), and 700–720 (IKNI…MYNF).

The protein belongs to the TrbL/VirB6 family.

The protein localises to the cell membrane. This is an uncharacterized protein from Rickettsia prowazekii (strain Madrid E).